The following is a 301-amino-acid chain: Ribonuclease Z (301 aa).

The Zn(2+) site is built by His-61, His-63, Asp-65, His-66, His-140, Asp-211, and His-269. Asp-65 (proton acceptor) is an active-site residue.

Belongs to the RNase Z family. Homodimer. It depends on Zn(2+) as a cofactor.

The enzyme catalyses Endonucleolytic cleavage of RNA, removing extra 3' nucleotides from tRNA precursor, generating 3' termini of tRNAs. A 3'-hydroxy group is left at the tRNA terminus and a 5'-phosphoryl group is left at the trailer molecule.. In terms of biological role, zinc phosphodiesterase, which displays some tRNA 3'-processing endonuclease activity. Probably involved in tRNA maturation, by removing a 3'-trailer from precursor tRNA. The chain is Ribonuclease Z from Bradyrhizobium sp. (strain ORS 278).